Here is a 1463-residue protein sequence, read N- to C-terminus: Regulating synaptic membrane exocytosis protein 1 (1463 aa).

The disordered stretch occupies residues 1-26; sequence MSSAVGPRGPRPPTVPPPMQELPDLS. The span at 9-20 shows a compositional bias: pro residues; it reads GPRPPTVPPPMQ. Positions 22 to 205 constitute a RabBD domain; sequence LPDLSHLTEE…TKSGAWFFGS (184 aa). Residues 133–193 form an FYVE-type zinc finger; the sequence is KDDAPTCGIC…VCNLCRKQQE (61 aa). The Zn(2+) site is built by C139, C142, C155, C158, C163, C166, C185, and C188. Residues 205–393 are disordered; the sequence is SGPQQPSQDG…DVELESESVS (189 aa). The span at 206 to 222 shows a compositional bias: polar residues; it reads GPQQPSQDGTLSDTATG. Residues 227-240 are compositionally biased toward basic and acidic residues; sequence VPREKKARLQERSR. A compositionally biased stretch (polar residues) spans 241 to 256; that stretch reads SQTPLSTAAVSSQDTA. Positions 327–372 are enriched in basic and acidic residues; that stretch reads ADERERKERRETRRLEKGRSQDYPDRLEKREDGRVAEDEKQRKEEE. A compositionally biased stretch (acidic residues) spans 381–391; sequence SCEDVELESES. S413 is modified (phosphoserine). The PDZ domain maps to 440–526; the sequence is RTTMPKESGA…EPQVEIIVSR (87 aa). Positions 533–567 are disordered; sequence RIPESSHPPLESSSSSFESQKMERPSISVISPTSP. The span at 535-551 shows a compositional bias: low complexity; sequence PESSHPPLESSSSSFES. S563 and S566 each carry phosphoserine. A C2 1 domain is found at 577 to 700; it reads LPGQLSVKLW…ALLDDEPHWY (124 aa). The interval 705–856 is disordered; the sequence is HDESSLPLPQ…YSSEPDSELL (152 aa). At S716 the chain carries Phosphoserine. Over residues 770-779 the composition is skewed to polar residues; the sequence is ATTLTVPEQQ. S812 is modified (phosphoserine). Positions 827 to 844 are enriched in basic and acidic residues; it reads RHHDASRSLADHRSRHAE. S866 carries the phosphoserine modification. Residues 874-1049 form a disordered region; sequence SELQPSLDRA…RQLPQVPVRS (176 aa). The segment covering 928-941 has biased composition (basic and acidic residues); that stretch reads PENDRHSRKSERSS. Over residues 1021-1035 the composition is skewed to polar residues; it reads QGSPTQSPPADTSFG. Position 1023 is a phosphoserine (S1023). T1025 bears the Phosphothreonine mark. Phosphoserine is present on residues S1027, S1079, S1081, S1082, S1110, S1111, and S1113. Positions 1104–1161 are disordered; that stretch reads DNASAKSSDSDVSDVSAISRASSTSRLSSTSFMSEQSERPRGRISSFTPKMQGRRMGT. Residues 1116–1137 are compositionally biased toward low complexity; it reads SDVSAISRASSTSRLSSTSFMS. S1187 carries the post-translational modification Phosphoserine. Positions 1216–1266 are disordered; that stretch reads RSRSTSQLSQTESGHKKLKSTIQRSTETGMAAEMRKMVRQPSRESTDGSIN. Residues 1248 to 1261 are compositionally biased toward basic and acidic residues; it reads EMRKMVRQPSREST. One can recognise a C2 2 domain in the interval 1309-1427; sequence AMGDIQIGME…DLSSMVIGWY (119 aa). 4 positions are modified to phosphoserine: S1448, S1451, S1454, and S1463.

In terms of assembly, binds SNAP25, SYT1 and CACNA1B. Interaction with SYT1 is enhanced by calcium ions. Interaction with SNAP25 is weaker in the presence of calcium ions. Interacts with TSPOAP1 and RIMBP2; interacts with PPFIA3 and PPFIA4. Interacts with ERC1. Interacts with RAB3A, RAB3B and RAB3D that have been activated by GTP-binding. Interacts with RAB3C, RAB10, RAB26 and RAB37. Binds UNC13A. Post-translationally, phosphorylated by BRSK1.

It is found in the cell membrane. It localises to the synapse. The protein resides in the presynaptic cell membrane. Functionally, rab effector involved in exocytosis. May act as scaffold protein that regulates neurotransmitter release at the active zone. Essential for maintaining normal probability of neurotransmitter release and for regulating release during short-term synaptic plasticity. Plays a role in dendrite formation by melanocytes. This Mus musculus (Mouse) protein is Regulating synaptic membrane exocytosis protein 1 (Rims1).